The sequence spans 464 residues: Vitamin D3 hydroxylase-associated protein (464 aa).

Active-site charge relay system residues include lysine 150 and serine 225. The active-site Acyl-ester intermediate is serine 249.

This sequence belongs to the amidase family. In terms of tissue distribution, kidney.

The protein localises to the mitochondrion inner membrane. May have a vitamin D3 hydroxylase regulatory function. In Gallus gallus (Chicken), this protein is Vitamin D3 hydroxylase-associated protein.